Consider the following 394-residue polypeptide: Dual-specificity RNA methyltransferase RlmN (394 aa).

Glu-115 (proton acceptor) is an active-site residue. One can recognise a Radical SAM core domain in the interval 121–363 (DEGRGTLCVS…SPIRTPRGED (243 aa)). A disulfide bond links Cys-128 and Cys-368. [4Fe-4S] cluster-binding residues include Cys-135, Cys-139, and Cys-142. S-adenosyl-L-methionine contacts are provided by residues 194–195 (GE), Ser-226, 248–250 (SFH), and Asn-325. Residue Cys-368 is the S-methylcysteine intermediate of the active site.

This sequence belongs to the radical SAM superfamily. RlmN family. It depends on [4Fe-4S] cluster as a cofactor.

It is found in the cytoplasm. It carries out the reaction adenosine(2503) in 23S rRNA + 2 reduced [2Fe-2S]-[ferredoxin] + 2 S-adenosyl-L-methionine = 2-methyladenosine(2503) in 23S rRNA + 5'-deoxyadenosine + L-methionine + 2 oxidized [2Fe-2S]-[ferredoxin] + S-adenosyl-L-homocysteine. The enzyme catalyses adenosine(37) in tRNA + 2 reduced [2Fe-2S]-[ferredoxin] + 2 S-adenosyl-L-methionine = 2-methyladenosine(37) in tRNA + 5'-deoxyadenosine + L-methionine + 2 oxidized [2Fe-2S]-[ferredoxin] + S-adenosyl-L-homocysteine. Functionally, specifically methylates position 2 of adenine 2503 in 23S rRNA and position 2 of adenine 37 in tRNAs. m2A2503 modification seems to play a crucial role in the proofreading step occurring at the peptidyl transferase center and thus would serve to optimize ribosomal fidelity. The chain is Dual-specificity RNA methyltransferase RlmN from Roseobacter denitrificans (strain ATCC 33942 / OCh 114) (Erythrobacter sp. (strain OCh 114)).